The primary structure comprises 107 residues: U1-lycotoxin-Ls1b (107 aa).

Positions 1-20 (MMKVLVVVALLVTLISYSSS) are cleaved as a signal peptide. The propeptide occupies 21 to 41 (EGIDDLEADELLSLMADEQTR). Cystine bridges form between Cys44–Cys59, Cys51–Cys68, Cys58–Cys86, and Cys70–Cys84.

It belongs to the neurotoxin 19 (CSTX) family. 04 (U1-Lctx) subfamily. In terms of tissue distribution, expressed by the venom gland.

It is found in the secreted. The chain is U1-lycotoxin-Ls1b from Lycosa singoriensis (Wolf spider).